The chain runs to 248 residues: Transmembrane protein 223 (248 aa).

3 helical membrane passes run 46–68 (IFRP…AAVA), 84–104 (LLAI…HFAF), and 140–160 (YGFT…ALLF).

This sequence belongs to the TMEM223 family.

It localises to the mitochondrion inner membrane. Mitochondrial ribosome-associated protein involved in the first steps of cytochrome c oxidase complex (complex IV) biogenesis. Stimulates the translation of MT-CO1 mRNA and is a constituent of early MT-CO1 assembly intermediates. The protein is Transmembrane protein 223 of Danio rerio (Zebrafish).